Here is a 1578-residue protein sequence, read N- to C-terminus: Pentafunctional AROM polypeptide (1578 aa).

Positions 1–393 (MSVELAKVSI…YGTSAHVVSD (393 aa)) are 3-dehydroquinate synthase. Residues 44-46 (DTN), 79-82 (EAHK), 110-112 (GGV), and Asp-115 contribute to the NAD(+) site. Residue Arg-126 coordinates 7-phospho-2-dehydro-3-deoxy-D-arabino-heptonate. Residue 135–136 (TS) participates in NAD(+) binding. 7-phospho-2-dehydro-3-deoxy-D-arabino-heptonate is bound by residues Asp-142 and Lys-148. Lys-157 is a binding site for NAD(+). Asn-158 is a binding site for 7-phospho-2-dehydro-3-deoxy-D-arabino-heptonate. Residues 175-178 (WLET) and Asn-186 each bind NAD(+). Position 190 (Glu-190) interacts with Zn(2+). 7-phospho-2-dehydro-3-deoxy-D-arabino-heptonate-binding positions include 190-193 (EVIK) and Lys-259. Glu-269 serves as the catalytic Proton acceptor; for 3-dehydroquinate synthase activity. 7-phospho-2-dehydro-3-deoxy-D-arabino-heptonate-binding positions include 273-277 (RNLLN) and His-280. His-280 contacts Zn(2+). The Proton acceptor; for 3-dehydroquinate synthase activity role is filled by His-284. Residues His-296 and Lys-365 each contribute to the 7-phospho-2-dehydro-3-deoxy-D-arabino-heptonate site. A Zn(2+)-binding site is contributed by His-296. The interval 406 to 863 (VHPFNNIPEG…WDVLHSQLGA (458 aa)) is EPSP synthase. Cys-845 acts as the For EPSP synthase activity in catalysis. Residues 882 to 1071 (VVIIGMRAAG…VPSRRSAFVC (190 aa)) are shikimate kinase. 886-893 (GMRAAGKS) is an ATP binding site. The interval 1072–1284 (LTFEDLSDHL…AAPGQLTLAE (213 aa)) is 3-dehydroquinase. The active-site Proton acceptor; for 3-dehydroquinate dehydratase activity is His-1189. Lys-1218 acts as the Schiff-base intermediate with substrate; for 3-dehydroquinate dehydratase activity in catalysis. The interval 1297-1578 (AKKFFVIGSP…KAIFDAVTQE (282 aa)) is shikimate dehydrogenase.

This sequence in the N-terminal section; belongs to the sugar phosphate cyclases superfamily. Dehydroquinate synthase family. The protein in the 2nd section; belongs to the EPSP synthase family. In the 3rd section; belongs to the shikimate kinase family. It in the 4th section; belongs to the type-I 3-dehydroquinase family. This sequence in the C-terminal section; belongs to the shikimate dehydrogenase family. Homodimer. Requires Zn(2+) as cofactor.

It is found in the cytoplasm. It carries out the reaction 7-phospho-2-dehydro-3-deoxy-D-arabino-heptonate = 3-dehydroquinate + phosphate. The catalysed reaction is 3-dehydroquinate = 3-dehydroshikimate + H2O. The enzyme catalyses shikimate + NADP(+) = 3-dehydroshikimate + NADPH + H(+). It catalyses the reaction shikimate + ATP = 3-phosphoshikimate + ADP + H(+). It carries out the reaction 3-phosphoshikimate + phosphoenolpyruvate = 5-O-(1-carboxyvinyl)-3-phosphoshikimate + phosphate. The protein operates within metabolic intermediate biosynthesis; chorismate biosynthesis; chorismate from D-erythrose 4-phosphate and phosphoenolpyruvate: step 2/7. It functions in the pathway metabolic intermediate biosynthesis; chorismate biosynthesis; chorismate from D-erythrose 4-phosphate and phosphoenolpyruvate: step 3/7. Its pathway is metabolic intermediate biosynthesis; chorismate biosynthesis; chorismate from D-erythrose 4-phosphate and phosphoenolpyruvate: step 4/7. It participates in metabolic intermediate biosynthesis; chorismate biosynthesis; chorismate from D-erythrose 4-phosphate and phosphoenolpyruvate: step 5/7. The protein operates within metabolic intermediate biosynthesis; chorismate biosynthesis; chorismate from D-erythrose 4-phosphate and phosphoenolpyruvate: step 6/7. The AROM polypeptide catalyzes 5 consecutive enzymatic reactions in prechorismate polyaromatic amino acid biosynthesis. This chain is Pentafunctional AROM polypeptide, found in Kluyveromyces lactis (strain ATCC 8585 / CBS 2359 / DSM 70799 / NBRC 1267 / NRRL Y-1140 / WM37) (Yeast).